Here is a 135-residue protein sequence, read N- to C-terminus: Small ribosomal subunit protein uS8 (135 aa).

Belongs to the universal ribosomal protein uS8 family. As to quaternary structure, part of the 30S ribosomal subunit. Contacts proteins S5 and S12.

In terms of biological role, one of the primary rRNA binding proteins, it binds directly to 16S rRNA central domain where it helps coordinate assembly of the platform of the 30S subunit. This Salinispora arenicola (strain CNS-205) protein is Small ribosomal subunit protein uS8.